The following is a 279-amino-acid chain: Ribosomal RNA small subunit methyltransferase J (279 aa).

S-adenosyl-L-methionine-binding positions include 138–139 (ER) and aspartate 194.

It belongs to the methyltransferase superfamily. RsmJ family.

Its subcellular location is the cytoplasm. It carries out the reaction guanosine(1516) in 16S rRNA + S-adenosyl-L-methionine = N(2)-methylguanosine(1516) in 16S rRNA + S-adenosyl-L-homocysteine + H(+). Specifically methylates the guanosine in position 1516 of 16S rRNA. This Acinetobacter baumannii (strain SDF) protein is Ribosomal RNA small subunit methyltransferase J.